An 85-amino-acid chain; its full sequence is WAP four-disulfide core domain protein 12 (85 aa).

A signal peptide spans Met1 to Gly21. The region spanning Lys25–Val72 is the WAP domain. Intrachain disulfides connect Cys32–Cys60, Cys39–Cys64, Cys47–Cys59, and Cys53–Cys68.

In terms of tissue distribution, constitutively expressed in tongue.

Its subcellular location is the secreted. In terms of biological role, antibacterial protein which inhibits the growth of E.coli and S.aureus. Putative acid-stable proteinase inhibitor. The protein is WAP four-disulfide core domain protein 12 of Mus musculus (Mouse).